A 175-amino-acid polypeptide reads, in one-letter code: Heme-dependent oxidative N-demethylase delta subunit (175 aa).

In terms of assembly, the heme-dependent oxidative N-demethylase (HODM) is a heterotetramer composed of a catalytic alpha subunit, a FMN/2Fe-2S-dependent oxidoreductase beta subunit, a gamma subunit with putative aminotransferase activity, and a delta subunit of unknown function.

Its function is as follows. Component of the heme-dependent oxidative N-demethylase (HODM) enzyme, that catalyzes the NADPH-dependent oxidation of dimethylamine (DMA) to methylamine (MA) and formaldehyde. Functions in bacterial methylated amine catabolism, linking alkylamine oxidation to the tetrahydrofolate C1 pool. The function of the delta subunit is unknown. In Ectopseudomonas mendocina (strain ymp) (Pseudomonas mendocina), this protein is Heme-dependent oxidative N-demethylase delta subunit.